A 437-amino-acid polypeptide reads, in one-letter code: GTPase Der (437 aa).

2 consecutive EngA-type G domains span residues 3-168 and 178-353; these read PLIA…PCPE and IKLA…LNRR. Residues 9–16, 56–60, 120–123, 184–191, 231–235, and 296–299 contribute to the GTP site; these read GRPNVGKS, DTGGY, NKVD, DTAGL, and NKWD. Residues 354–437 form the KH-like domain; the sequence is QKISTSNLNR…IPITMRFLRK (84 aa).

Belongs to the TRAFAC class TrmE-Era-EngA-EngB-Septin-like GTPase superfamily. EngA (Der) GTPase family. Associates with the 50S ribosomal subunit.

GTPase that plays an essential role in the late steps of ribosome biogenesis. This chain is GTPase Der, found in Chlorobaculum tepidum (strain ATCC 49652 / DSM 12025 / NBRC 103806 / TLS) (Chlorobium tepidum).